Here is a 788-residue protein sequence, read N- to C-terminus: DNA ligase (788 aa).

NAD(+) is bound by residues 35-39 (DAEYD), 84-85 (SL), and Glu124. The active-site N6-AMP-lysine intermediate is Lys126. The NAD(+) site is built by Arg147, Glu184, Lys300, and Lys324. Positions 418, 421, 448, and 454 each coordinate Zn(2+). The region spanning 707-788 (AEGLPLAGQT…FIERLAQLGS (82 aa)) is the BRCT domain.

It belongs to the NAD-dependent DNA ligase family. LigA subfamily. Mg(2+) is required as a cofactor. The cofactor is Mn(2+).

It catalyses the reaction NAD(+) + (deoxyribonucleotide)n-3'-hydroxyl + 5'-phospho-(deoxyribonucleotide)m = (deoxyribonucleotide)n+m + AMP + beta-nicotinamide D-nucleotide.. In terms of biological role, DNA ligase that catalyzes the formation of phosphodiester linkages between 5'-phosphoryl and 3'-hydroxyl groups in double-stranded DNA using NAD as a coenzyme and as the energy source for the reaction. It is essential for DNA replication and repair of damaged DNA. This is DNA ligase from Stutzerimonas stutzeri (strain A1501) (Pseudomonas stutzeri).